Here is a 283-residue protein sequence, read N- to C-terminus: Thymidylate synthase (283 aa).

Arg22 is a binding site for dUMP. Cys160 (nucleophile) is an active-site residue. Residues 180–183 (RSCD), Asn191, and 221–223 (HIY) contribute to the dUMP site. Position 183 (Asp183) interacts with (6R)-5,10-methylene-5,6,7,8-tetrahydrofolate. Ser282 contributes to the (6R)-5,10-methylene-5,6,7,8-tetrahydrofolate binding site.

This sequence belongs to the thymidylate synthase family. Bacterial-type ThyA subfamily. In terms of assembly, homodimer.

The protein resides in the cytoplasm. It catalyses the reaction dUMP + (6R)-5,10-methylene-5,6,7,8-tetrahydrofolate = 7,8-dihydrofolate + dTMP. It participates in pyrimidine metabolism; dTTP biosynthesis. Its function is as follows. Catalyzes the reductive methylation of 2'-deoxyuridine-5'-monophosphate (dUMP) to 2'-deoxythymidine-5'-monophosphate (dTMP) while utilizing 5,10-methylenetetrahydrofolate (mTHF) as the methyl donor and reductant in the reaction, yielding dihydrofolate (DHF) as a by-product. This enzymatic reaction provides an intracellular de novo source of dTMP, an essential precursor for DNA biosynthesis. The protein is Thymidylate synthase of Haemophilus influenzae (strain PittGG).